The following is a 637-amino-acid chain: Probable membrane transporter protein MamO (637 aa).

Residues M1–K24 lie on the Cytoplasmic side of the membrane. A helical membrane pass occupies residues T25 to L45. Residues D46–D352 lie on the Lumenal side of the membrane. The interval L78–V268 is protease-like. A divalent metal cation-binding residues include H148 and H263. Residues I353–G373 traverse the membrane as a helical segment. Positions M370–V637 are TSUP-like. The Cytoplasmic portion of the chain corresponds to G374–Q378. The helical transmembrane segment at V379–L399 threads the bilayer. Residues T400–Q416 lie on the Lumenal side of the membrane. Residues L417 to G437 form a helical membrane-spanning segment. Y438 is a topological domain (cytoplasmic). A helical membrane pass occupies residues F439 to I459. Residues M460–S517 lie on the Lumenal side of the membrane. Residues A518–I538 traverse the membrane as a helical segment. At E539–A554 the chain is on the cytoplasmic side. A helical transmembrane segment spans residues I555–L575. Over H576 to E586 the chain is Lumenal. The helical transmembrane segment at A587–A607 threads the bilayer. At R608 to R616 the chain is on the cytoplasmic side. A helical transmembrane segment spans residues V617–V637.

In the N-terminal section; belongs to the peptidase S1C family. It in the C-terminal section; belongs to the 4-toluene sulfonate uptake permease (TSUP) (TC 2.A.102) family. Requires a metal cation as cofactor. Subject to proteolytic cleavage by MamE.

The protein localises to the magnetosome membrane. Functionally, plays 2 roles; promotes magnetite nucleation/formation and activates the MamE protease. Despite its near conservation of a protease-like sequence, this is probably not a protease. Required in conjunction with MamP for proteolysis of at least MamE, itself and MamP. May transport a solute that controls MamE's protease activity. May place individual iron atoms into the magnetite lattice. This Paramagnetospirillum magneticum (strain ATCC 700264 / AMB-1) (Magnetospirillum magneticum) protein is Probable membrane transporter protein MamO (mamO).